Here is an 801-residue protein sequence, read N- to C-terminus: Bromodomain-containing protein 2 (801 aa).

Position 1 is an N-acetylmethionine (methionine 1). The residue at position 6 (threonine 6) is a Phosphothreonine. A Phosphoserine modification is found at serine 37. Positions 53 to 73 are disordered; sequence ALQLTPANPPPPEVSNPKKPG. Positions 74 to 180 constitute a Bromo 1 domain; sequence RVTNQLQYLH…KIFLQKVASM (107 aa). Aspartate 112, tyrosine 155, asparagine 156, lysine 157, aspartate 160, and aspartate 161 together coordinate a protein. Disordered regions lie at residues 268-349, 456-647, and 737-801; these read PPAQ…LSEQ, EPLE…YDEK, and EKRL…SDSG. Residues 285-298 show a composition bias toward low complexity; sequence TTTPTPTAILAPGS. Serine 298, serine 301, and serine 305 each carry phosphoserine. Residues 316–332 show a composition bias toward basic and acidic residues; the sequence is MRRESGRPIKPPRKDLP. Positions 344-453 constitute a Bromo 2 domain; it reads GKLSEQLKHC…DVFEFRYAKM (110 aa). Positions 481–514 are enriched in acidic residues; sequence SSEESSSESSSEEEEEEDEEDEEEEESESSDSEE. Residues 544–566 show a composition bias toward basic residues; the sequence is KPKRKREKKEKKKKRKAEKHRGR. Residues 555–559 carry the Nuclear localization signal motif; sequence KKKRK. Residues 592–612 are compositionally biased toward gly residues; sequence GSGGGSAALGPSGFGPSGGSG. The NET domain maps to 632–714; it reads DSEEEEESRP…SCLRKKPRKP (83 aa). Serine 633 is subject to Phosphoserine. The segment covering 763–795 has biased composition (low complexity); that stretch reads SSSAQQVAVSRLSASSSSSDSSSSSSSSSSSDT.

This sequence belongs to the BET family. In terms of assembly, homodimer. Interacts with E2F1. Interacts with (acetylated) STAT3; promoting STAT3 recruitment to chromatin. Interacts with CTCF; promoting BRD2 recruitment to chromatin. (Microbial infection) Interacts with herpes virus 8 protein LANA1.

It localises to the nucleus. It is found in the chromosome. Its activity is regulated as follows. Inhibited by JQ1, a thieno-triazolo-1,4-diazepine derivative, which specifically inhibits members of the BET family (BRD2, BRD3 and BRD4). The first bromo domain is inhibited by GSK778 (iBET-BD1), which specifically inhibits the first bromo domain of members of the BET family (BRD2, BRD3 and BRD4). The second bromo domain is inhibited by ABBV-744, which specifically inhibits the second bromo domain of members of the BET family (BRD2, BRD3 and BRD4). The second bromo domain is inhibited by GSK046 (iBET-BD2), which specifically inhibits the second bromo domain of members of the BET family (BRD2, BRD3 and BRD4). Functionally, chromatin reader protein that specifically recognizes and binds histone H4 acetylated at 'Lys-5' and 'Lys-12' (H4K5ac and H4K12ac, respectively), thereby controlling gene expression and remodeling chromatin structures. Recruits transcription factors and coactivators to target gene sites, and activates RNA polymerase II machinery for transcriptional elongation. Plays a key role in genome compartmentalization via its association with CTCF and cohesin: recruited to chromatin by CTCF and promotes formation of topologically associating domains (TADs) via its ability to bind acetylated histones, contributing to CTCF boundary formation and enhancer insulation. Also recognizes and binds acetylated non-histone proteins, such as STAT3. Involved in inflammatory response by regulating differentiation of naive CD4(+) T-cells into T-helper Th17: recognizes and binds STAT3 acetylated at 'Lys-87', promoting STAT3 recruitment to chromatin. In addition to acetylated lysines, also recognizes and binds lysine residues on histones that are both methylated and acetylated on the same side chain to form N6-acetyl-N6-methyllysine (Kacme), an epigenetic mark of active chromatin associated with increased transcriptional initiation. Specifically binds histone H4 acetyl-methylated at 'Lys-5' and 'Lys-12' (H4K5acme and H4K12acme, respectively). The protein is Bromodomain-containing protein 2 of Homo sapiens (Human).